We begin with the raw amino-acid sequence, 659 residues long: UvrABC system protein B (659 aa).

The region spanning 25-182 (QSIENGNRGQ…KKLIEIQYER (158 aa)) is the Helicase ATP-binding domain. Residue 38 to 45 (GVTGSGKT) participates in ATP binding. The short motif at 91–114 (YYDYYQPEAYVPQTDTFIEKDASI) is the Beta-hairpin element. Residues 429–582 (QIDDLYGEIQ…QMEYNEEHNI (154 aa)) enclose the Helicase C-terminal domain. The 36-residue stretch at 622–657 (EKLIEQYEEEMKEAAKNLQFERAAELRDIIKDLKEN) folds into the UVR domain.

It belongs to the UvrB family. Forms a heterotetramer with UvrA during the search for lesions. Interacts with UvrC in an incision complex.

It localises to the cytoplasm. In terms of biological role, the UvrABC repair system catalyzes the recognition and processing of DNA lesions. A damage recognition complex composed of 2 UvrA and 2 UvrB subunits scans DNA for abnormalities. Upon binding of the UvrA(2)B(2) complex to a putative damaged site, the DNA wraps around one UvrB monomer. DNA wrap is dependent on ATP binding by UvrB and probably causes local melting of the DNA helix, facilitating insertion of UvrB beta-hairpin between the DNA strands. Then UvrB probes one DNA strand for the presence of a lesion. If a lesion is found the UvrA subunits dissociate and the UvrB-DNA preincision complex is formed. This complex is subsequently bound by UvrC and the second UvrB is released. If no lesion is found, the DNA wraps around the other UvrB subunit that will check the other stand for damage. This Clostridium perfringens (strain ATCC 13124 / DSM 756 / JCM 1290 / NCIMB 6125 / NCTC 8237 / Type A) protein is UvrABC system protein B.